We begin with the raw amino-acid sequence, 425 residues long: Serine hydroxymethyltransferase (425 aa).

(6S)-5,6,7,8-tetrahydrofolate is bound by residues L128 and G132–L134. The residue at position 237 (K237) is an N6-(pyridoxal phosphate)lysine.

This sequence belongs to the SHMT family. Homodimer. Pyridoxal 5'-phosphate is required as a cofactor.

The protein localises to the cytoplasm. The catalysed reaction is (6R)-5,10-methylene-5,6,7,8-tetrahydrofolate + glycine + H2O = (6S)-5,6,7,8-tetrahydrofolate + L-serine. It functions in the pathway one-carbon metabolism; tetrahydrofolate interconversion. Its pathway is amino-acid biosynthesis; glycine biosynthesis; glycine from L-serine: step 1/1. Its function is as follows. Catalyzes the reversible interconversion of serine and glycine with tetrahydrofolate (THF) serving as the one-carbon carrier. This reaction serves as the major source of one-carbon groups required for the biosynthesis of purines, thymidylate, methionine, and other important biomolecules. Also exhibits THF-independent aldolase activity toward beta-hydroxyamino acids, producing glycine and aldehydes, via a retro-aldol mechanism. This chain is Serine hydroxymethyltransferase, found in Wolbachia sp. subsp. Drosophila simulans (strain wRi).